We begin with the raw amino-acid sequence, 1911 residues long: Protein TIC 214 (1911 aa).

Transmembrane regions (helical) follow at residues I41–G61, I81–L103, G108–N128, F147–L167, I195–I215, and I238–I258. Disordered stretches follow at residues E265–E299, D798–N817, and N1599–K1647. The segment covering E268–T297 has biased composition (acidic residues). 2 stretches are compositionally biased toward basic and acidic residues: residues Q1603–G1615 and Q1623–Y1635.

This sequence belongs to the TIC214 family. As to quaternary structure, part of the Tic complex.

The protein resides in the plastid. The protein localises to the chloroplast inner membrane. In terms of biological role, involved in protein precursor import into chloroplasts. May be part of an intermediate translocation complex acting as a protein-conducting channel at the inner envelope. The sequence is that of Protein TIC 214 from Lemna minor (Common duckweed).